The following is a 334-amino-acid chain: Isopentenyl-diphosphate delta-isomerase (334 aa).

5 to 6 (RK) contributes to the substrate binding site. Residues 60-62 (AMT), S90, and N117 contribute to the FMN site. Q147 serves as a coordination point for substrate. E148 serves as a coordination point for Mg(2+). Residues K179, S204, T209, 253 to 255 (GVR), and 274 to 275 (SR) contribute to the FMN site.

Belongs to the IPP isomerase type 2 family. As to quaternary structure, homooctamer. Dimer of tetramers. FMN serves as cofactor. NADPH is required as a cofactor. It depends on Mg(2+) as a cofactor.

The protein resides in the cytoplasm. It catalyses the reaction isopentenyl diphosphate = dimethylallyl diphosphate. In terms of biological role, involved in the biosynthesis of isoprenoids. Catalyzes the 1,3-allylic rearrangement of the homoallylic substrate isopentenyl (IPP) to its allylic isomer, dimethylallyl diphosphate (DMAPP). This chain is Isopentenyl-diphosphate delta-isomerase, found in Streptococcus gordonii (strain Challis / ATCC 35105 / BCRC 15272 / CH1 / DL1 / V288).